We begin with the raw amino-acid sequence, 270 residues long: Large ribosomal subunit protein uL30 (270 aa).

Met1 is subject to N-acetylmethionine. A run of 6 repeats spans residues 7-18 (KKKKVATVPGTL), 19-29 (KKKVPAGPKTL), 30-40 (KKKVPAVPETL), 41-52 (KKKRRNFAELKV), 53-64 (KRLRKKFALKTL), and 65-76 (RKARRKLIYEKA). Positions 7-76 (KKKKVATVPG…ARRKLIYEKA (70 aa)) are 6 X 12 AA tandem repeats. Thr39 carries the post-translational modification Phosphothreonine. N6-acetyllysine is present on Lys146. The residue at position 149 (Lys149) is an N6-succinyllysine. At Tyr161 the chain carries Phosphotyrosine.

Belongs to the universal ribosomal protein uL30 family. As to quaternary structure, component of the large ribosomal subunit. Homodimer. Interacts with DHX33.

It localises to the cytoplasm. In terms of biological role, component of the large ribosomal subunit. The ribosome is a large ribonucleoprotein complex responsible for the synthesis of proteins in the cell. Binds to G-rich structures in 28S rRNA and in mRNAs. Plays a regulatory role in the translation apparatus; inhibits cell-free translation of mRNAs. This chain is Large ribosomal subunit protein uL30 (Rpl7), found in Mus musculus (Mouse).